Here is a 294-residue protein sequence, read N- to C-terminus: Cytidine deaminase (294 aa).

CMP/dCMP-type deaminase domains follow at residues 48 to 168 (DEDA…FGPK) and 186 to 294 (LTGD…VLLA). 89 to 91 (NME) contributes to the substrate binding site. Histidine 102 contributes to the Zn(2+) binding site. Glutamate 104 serves as the catalytic Proton donor. 2 residues coordinate Zn(2+): cysteine 129 and cysteine 132.

The protein belongs to the cytidine and deoxycytidylate deaminase family. As to quaternary structure, homodimer. Zn(2+) is required as a cofactor.

The catalysed reaction is cytidine + H2O + H(+) = uridine + NH4(+). The enzyme catalyses 2'-deoxycytidine + H2O + H(+) = 2'-deoxyuridine + NH4(+). Functionally, this enzyme scavenges exogenous and endogenous cytidine and 2'-deoxycytidine for UMP synthesis. The polypeptide is Cytidine deaminase (Escherichia coli O157:H7).